The chain runs to 843 residues: Protein MEI2-like 2 (843 aa).

RRM domains are found at residues 198 to 271 (RTLF…FSIP) and 283 to 356 (GTLV…LSRP).

Its function is as follows. Probable RNA-binding protein that plays a role in meiosis and vegetative growth. This is Protein MEI2-like 2 (ML2) from Arabidopsis thaliana (Mouse-ear cress).